The following is a 473-amino-acid chain: Photosystem II CP43 reaction center protein (473 aa).

Residues 1–14 (MKILYSLRRFYHVE) constitute a propeptide that is removed on maturation. Thr-15 is subject to N-acetylthreonine. A Phosphothreonine modification is found at Thr-15. Helical transmembrane passes span 69 to 93 (LFEVAHFVPEKPMYEQGLILLPHLA), 134 to 155 (LLGPETLEESFPFFGYVWKDRN), 178 to 200 (KALYFGGVYDTWAPGGGDVRKIT), 255 to 275 (KPFAWARRAFVWSGEAYLSYS), and 291 to 312 (WFNNTAYPSEFYGPTGPEASQA). Glu-367 serves as a coordination point for [CaMn4O5] cluster. The helical transmembrane segment at 447–471 (RARAAAAGFEKGIDRDLEPVLYMNP) threads the bilayer.

The protein belongs to the PsbB/PsbC family. PsbC subfamily. In terms of assembly, PSII is composed of 1 copy each of membrane proteins PsbA, PsbB, PsbC, PsbD, PsbE, PsbF, PsbH, PsbI, PsbJ, PsbK, PsbL, PsbM, PsbT, PsbX, PsbY, PsbZ, Psb30/Ycf12, at least 3 peripheral proteins of the oxygen-evolving complex and a large number of cofactors. It forms dimeric complexes. It depends on Binds multiple chlorophylls and provides some of the ligands for the Ca-4Mn-5O cluster of the oxygen-evolving complex. It may also provide a ligand for a Cl- that is required for oxygen evolution. PSII binds additional chlorophylls, carotenoids and specific lipids. as a cofactor.

It is found in the plastid. The protein localises to the chloroplast thylakoid membrane. Its function is as follows. One of the components of the core complex of photosystem II (PSII). It binds chlorophyll and helps catalyze the primary light-induced photochemical processes of PSII. PSII is a light-driven water:plastoquinone oxidoreductase, using light energy to abstract electrons from H(2)O, generating O(2) and a proton gradient subsequently used for ATP formation. This Lolium perenne (Perennial ryegrass) protein is Photosystem II CP43 reaction center protein.